A 277-amino-acid polypeptide reads, in one-letter code: Diaminopimelate epimerase (277 aa).

N13, Q46, and N66 together coordinate substrate. C75 (proton donor) is an active-site residue. Substrate-binding positions include 76 to 77 (GN), N160, N193, and 211 to 212 (ER). Catalysis depends on C220, which acts as the Proton acceptor. 221–222 (GS) lines the substrate pocket.

The protein belongs to the diaminopimelate epimerase family. In terms of assembly, homodimer.

It localises to the cytoplasm. The catalysed reaction is (2S,6S)-2,6-diaminopimelate = meso-2,6-diaminopimelate. Its pathway is amino-acid biosynthesis; L-lysine biosynthesis via DAP pathway; DL-2,6-diaminopimelate from LL-2,6-diaminopimelate: step 1/1. Its function is as follows. Catalyzes the stereoinversion of LL-2,6-diaminopimelate (L,L-DAP) to meso-diaminopimelate (meso-DAP), a precursor of L-lysine and an essential component of the bacterial peptidoglycan. In Legionella pneumophila (strain Paris), this protein is Diaminopimelate epimerase.